The sequence spans 234 residues: Probable RNA/DNA demethylase ALKBH6 (234 aa).

The 127-residue stretch at 96–222 (TANHVLVNEY…RVSLTIRHVP (127 aa)) folds into the Fe2OG dioxygenase domain. 2-oxoglutarate-binding residues include asparagine 103 and tyrosine 105. Residues histidine 114, aspartate 116, and histidine 180 each contribute to the Fe cation site. 2-oxoglutarate contacts are provided by arginine 213 and serine 215.

This sequence belongs to the alkB family. Requires Fe(2+) as cofactor.

The protein localises to the cytoplasm. It is found in the nucleus. Functionally, probable Fe(2+)/2-oxoglutarate-dependent dioxygenase involved in oxidative demethylation of nucleic acids. Binds nucleic acids with a preference for ssDNA or ssRNA to other types of DNAs. May play a role in nucleic acid damage repair. This is Probable RNA/DNA demethylase ALKBH6 (alkbh6) from Danio rerio (Zebrafish).